The primary structure comprises 184 residues: Calmodulin-related protein (184 aa).

4 consecutive EF-hand domains span residues 8–43 (DQISEFKEAFSLFDKDGDGCITTKELGTVMRSLGQN), 44–79 (PTEAELQDMINEVDADGNGTIDFPEFLNLMARKMKD), 81–116 (DSEEELKEAFRVFDKDQNGFISAAELRHVMTNLGEK), and 117–152 (LTDEEVDEMIREADVDGDGQINYEEFVKVMMANRRR). Residues D21, D23, D25, C27, E32, D57, D59, N61, T63, E68, D94, D96, N98, and E105 each contribute to the Ca(2+) site. Position 116 is an N6,N6,N6-trimethyllysine (K116). The Ca(2+) site is built by D130, D132, D134, Q136, and E141. The tract at residues 156-184 (EESKRSVNSNISRSNNGRKVRKRDRCTIL) is disordered. Over residues 161–170 (SVNSNISRSN) the composition is skewed to low complexity. Basic residues predominate over residues 171–184 (NGRKVRKRDRCTIL).

Belongs to the calmodulin family.

In terms of biological role, calmodulin mediates the control of a large number of enzymes, ion channels and other proteins by Ca(2+). Among the enzymes to be stimulated by the calmodulin-Ca(2+) complex are a number of protein kinases and phosphatases. The protein is Calmodulin-related protein (CAM53) of Petunia hybrida (Petunia).